The sequence spans 147 residues: Hemoglobin subunit beta (147 aa).

V2 bears the N-acetylvaline mark. In terms of domain architecture, Globin spans 3-147 (HLADDEKAAV…VSTALAHKYH (145 aa)). Phosphoserine is present on S45. K60 is subject to N6-acetyllysine. Residue H64 participates in heme b binding. K83 is modified (N6-acetyllysine). H93 serves as a coordination point for heme b. C94 is modified (S-nitrosocysteine). The residue at position 145 (K145) is an N6-acetyllysine.

Belongs to the globin family. In terms of assembly, heterotetramer of two alpha chains and two beta chains. In terms of tissue distribution, red blood cells.

In terms of biological role, involved in oxygen transport from the lung to the various peripheral tissues. The chain is Hemoglobin subunit beta (HBB) from Bradypus tridactylus (Pale-throated three-toed sloth).